The chain runs to 267 residues: Beta-lactamase OXA-5 (267 aa).

An N-terminal signal peptide occupies residues 1–19 (MKTIAAYLVLVFYASTALS). Ser67 serves as the catalytic Acyl-ester intermediate. An N6-carboxylysine modification is found at Lys70. 205–207 (KTG) serves as a coordination point for substrate.

This sequence belongs to the class-D beta-lactamase family.

The catalysed reaction is a beta-lactam + H2O = a substituted beta-amino acid. Inhibited by clavulanic acid. In terms of biological role, hydrolyzes both oxacillin and methicillin. This chain is Beta-lactamase OXA-5 (bla), found in Pseudomonas aeruginosa.